The following is a 547-amino-acid chain: Sterol carrier protein 2 (547 aa).

Serine 3 carries the post-translational modification Phosphoserine. Lysine 132 is modified (N6-acetyllysine; alternate). Lysine 132 is subject to N6-succinyllysine; alternate. Lysine 168 carries the N6-succinyllysine modification. N6-acetyllysine is present on residues lysine 173 and lysine 177. Lysine 183 bears the N6-acetyllysine; alternate mark. Lysine 183 is modified (N6-succinyllysine; alternate). Residue lysine 282 is modified to N6-succinyllysine. Residues lysine 341, lysine 432, lysine 438, lysine 443, and lysine 453 each carry the N6-acetyllysine; alternate modification. An N6-succinyllysine; alternate mark is found at lysine 341, lysine 432, lysine 438, lysine 443, and lysine 453. The SCP2 domain occupies 433–543 (ANLVFKEIEK…KLQNLQLQPG (111 aa)). The residue at position 464 (lysine 464) is an N6-succinyllysine. Residue lysine 470 is modified to N6-acetyllysine; alternate. N6-succinyllysine; alternate is present on lysine 470. Lysine 479 bears the N6-succinyllysine mark. N6-acetyllysine is present on lysine 491. N6-succinyllysine occurs at positions 492 and 511. Phosphoserine is present on serine 516. 2 positions are modified to N6-succinyllysine: lysine 522 and lysine 534. Positions 545-547 (AKL) match the Microbody targeting signal motif.

The protein in the N-terminal section; belongs to the thiolase-like superfamily. Thiolase family. Interacts with PEX5; the interaction is essential for peroxisomal import. In terms of processing, preSCP2, a protein with a molecular mass of about 15 kDa, is processed into its mature form (SCP2) by proteolytic cleavage of a 20 residue leader sequence after translocation into peroxisomes. Liver, fibroblasts, and placenta.

Its subcellular location is the peroxisome. It is found in the cytoplasm. It localises to the mitochondrion. The protein localises to the endoplasmic reticulum. It catalyses the reaction choloyl-CoA + propanoyl-CoA = 3alpha,7alpha,12alpha-trihydroxy-24-oxo-5beta-cholestan-26-oyl-CoA + CoA. The enzyme catalyses 4,8,12-trimethyltridecanoyl-CoA + propanoyl-CoA = 3-oxopristanoyl-CoA + CoA. The catalysed reaction is an acyl-CoA + acetyl-CoA = a 3-oxoacyl-CoA + CoA. It carries out the reaction hexanoyl-CoA + acetyl-CoA = 3-oxooctanoyl-CoA + CoA. It catalyses the reaction tetradecanoyl-CoA + acetyl-CoA = 3-oxohexadecanoyl-CoA + CoA. The enzyme catalyses 3-oxohexadecanedioyl-CoA + CoA = tetradecanedioyl-CoA + acetyl-CoA. The catalysed reaction is propanoyl-CoA + tetradecanoyl-CoA = 3-oxo-2-methylhexadecanoyl-CoA + CoA. It carries out the reaction butanoyl-CoA + acetyl-CoA = 3-oxohexanoyl-CoA + CoA. It catalyses the reaction octanoyl-CoA + acetyl-CoA = 3-oxodecanoyl-CoA + CoA. The enzyme catalyses decanoyl-CoA + acetyl-CoA = 3-oxododecanoyl-CoA + CoA. The catalysed reaction is dodecanoyl-CoA + acetyl-CoA = 3-oxotetradecanoyl-CoA + CoA. It carries out the reaction hexadecanoyl-CoA + acetyl-CoA = 3-oxooctadecanoyl-CoA + CoA. It catalyses the reaction 3-oxo-(9Z-octadecenoyl)-CoA + CoA = (7Z)-hexadecenoyl-CoA + acetyl-CoA. The enzyme catalyses 7-dehydrocholesterol(in) = 7-dehydrocholesterol(out). Functionally, plays a crucial role in the peroxisomal oxidation of branched-chain fatty acids. Catalyzes the last step of the peroxisomal beta-oxidation of branched chain fatty acids and the side chain of the bile acid intermediates di- and trihydroxycoprostanic acids (DHCA and THCA). Also active with medium and long straight chain 3-oxoacyl-CoAs. Stimulates the microsomal conversion of 7-dehydrocholesterol to cholesterol and transfers phosphatidylcholine and 7-dehydrocholesterol between membrances, in vitro. Isoforms SCP2 and SCPx cooperate in peroxisomal oxidation of certain naturally occurring tetramethyl-branched fatty acyl-CoAs. Mediates the transfer of all common phospholipids, cholesterol and gangliosides from the endoplasmic reticulum to the plasma membrane. May play a role in regulating steroidogenesis. Stimulates the microsomal conversion of 7-dehydrocholesterol to cholesterol. Also binds fatty acids and fatty acyl Coenzyme A (CoA) such as phytanoyl-CoA. Involved in the regulation phospholipid synthesis in endoplasmic reticulum enhancing the incorporation of exogenous fatty acid into glycerides. Seems to stimulate the rate-limiting step in phosphatidic acid formation mediated by GPAT3. Isoforms SCP2 and SCPx cooperate in peroxisomal oxidation of certain naturally occurring tetramethyl-branched fatty acyl-CoAs. This is Sterol carrier protein 2 from Homo sapiens (Human).